The following is a 766-amino-acid chain: UPF0313 protein PP_4872 (766 aa).

One can recognise a Radical SAM core domain in the interval alanine 371 to lysine 649. 3 residues coordinate [4Fe-4S] cluster: cysteine 385, cysteine 389, and cysteine 392. The disordered stretch occupies residues glycine 670–arginine 766. Residues lysine 723–alanine 735 are compositionally biased toward basic and acidic residues.

It belongs to the UPF0313 family. The cofactor is [4Fe-4S] cluster.

The sequence is that of UPF0313 protein PP_4872 from Pseudomonas putida (strain ATCC 47054 / DSM 6125 / CFBP 8728 / NCIMB 11950 / KT2440).